The sequence spans 636 residues: Polyadenylate-binding protein 1 (636 aa).

M1 is subject to N-acetylmethionine. 4 consecutive RRM domains span residues 11–89, 99–175, 191–268, and 294–370; these read ASLY…WSQR, GNIF…RFKS, TNVY…RAQK, and VNLY…LAQR. Positions 166–289 are CSDE1-binding; it reads RKVFVGRFKS…FEQMKQDRIT (124 aa). Position 299 is an N6-methyllysine (K299). S315 carries the phosphoserine modification. Phosphothreonine is present on T319. Omega-N-methylarginine occurs at positions 385, 419, 432, and 436. R455 and R460 each carry omega-N-methylated arginine; by CARM1. Residues R475 and R481 each carry the omega-N-methylarginine modification. Residue R493 is modified to Asymmetric dimethylarginine; alternate. The residue at position 493 (R493) is a Dimethylated arginine; alternate. R493 carries the omega-N-methylarginine; alternate modification. At R506 the chain carries Omega-N-methylarginine. K512 carries the N6-acetyllysine modification. Position 518 is an omega-N-methylarginine (R518). Residues 542 to 619 enclose the PABC domain; sequence QEPLTASMLA…AVAVLQAHQA (78 aa).

Belongs to the polyadenylate-binding protein type-1 family. May form homodimers. Component of a multisubunit autoregulatory ribonucleoprotein complex (ARC), at least composed of IGF2BP1, PABPC1 and CSDE1. Directly interacts with IGF2BP1. Part of a complex associated with the FOS mCRD domain and consisting of HNRPD, SYNCRIP, PAIP1 and CSDE1/UNR. Interacts with PAIP1 and PAIP2 (via the PABPC1-interacting motifs PAM1 and PAM2). Interacts with PAIP1 with a 1:1 stoichiometry and with PAIP2 with a 1:2 stoichiometry. The interaction with CSDE1 is direct and RNA-independent. Found in a mRNP complex with YBX2. Interacts with TENT2/GLD2. Identified in the spliceosome C complex. Identified in a mRNP complex, at least composed of DHX9, DDX3X, ELAVL1, HNRNPU, IGF2BP1, ILF3, PABPC1, PCBP2, PTBP2, STAU1, STAU2, SYNCRIP and YBX1. The interaction with DDX3X is direct and RNA-independent. This interaction increases in stressed cells and decreases during cell recovery. Identified in a IGF2BP1-dependent mRNP granule complex containing untranslated mRNAs. Interacts with NXF1/TAP. Interacts with PIWIL1. Interacts with AGO1, AGO2, GSPT1 and GSPT2. Interacts with LARP4B. Interacts (via the second and third RRM domains and the C-terminus) with PAIP2B (via central acidic portion and C-terminus). Forms a complex with LARP1 and SHFL. Interacts with LARP4. Interacts with ZFC3H1 in a RNase-sensitive manner. Interacts with TRIM71 (via NHL repeats) in an RNA-dependent manner. Interacts with TENT5C; the interaction has no effect on TENT5C poly(A) polymerase function. Interacts with G3BP1 and G3BP2. Interacts with ENDOV; the interaction is RNA-dependent and stimulates ENDOV activity. Interacts with UPF1; the interaction is RNA-dependent. Interacts with IGF2BP2 and IGF2BP3. May interact with SETX. Interacts with RBM46. Interacts with PAN3. In terms of processing, phosphorylated by MAPKAPK2. Methylated by CARM1. Arg-493 is dimethylated, probably to asymmetric dimethylarginine.

It is found in the cytoplasm. The protein localises to the stress granule. Its subcellular location is the nucleus. It localises to the cell projection. The protein resides in the lamellipodium. Its function is as follows. Binds the poly(A) tail of mRNA, including that of its own transcript, and regulates processes of mRNA metabolism such as pre-mRNA splicing and mRNA stability. Its function in translational initiation regulation can either be enhanced by PAIP1 or repressed by PAIP2. Can probably bind to cytoplasmic RNA sequences other than poly(A) in vivo. Binds to N6-methyladenosine (m6A)-containing mRNAs and contributes to MYC stability by binding to m6A-containing MYC mRNAs. Involved in translationally coupled mRNA turnover. Implicated with other RNA-binding proteins in the cytoplasmic deadenylation/translational and decay interplay of the FOS mRNA mediated by the major coding-region determinant of instability (mCRD) domain. Involved in regulation of nonsense-mediated decay (NMD) of mRNAs containing premature stop codons; for the recognition of premature termination codons (PTC) and initiation of NMD a competitive interaction between UPF1 and PABPC1 with the ribosome-bound release factors is proposed. By binding to long poly(A) tails, may protect them from uridylation by ZCCHC6/ZCCHC11 and hence contribute to mRNA stability. The sequence is that of Polyadenylate-binding protein 1 (PABPC1) from Pongo abelii (Sumatran orangutan).